The primary structure comprises 580 residues: Trafficking protein particle complex subunit 14 (580 aa).

2 disordered regions span residues 95 to 134 (GSAGDQDADPPGGGDPGGGGLFRGCSPLLTHGQGPATSGG) and 480 to 533 (VSHP…RSGS). A compositionally biased stretch (gly residues) spans 105-116 (PGGGDPGGGGLF). Ser-491 carries the post-translational modification Phosphoserine. The segment covering 492 to 502 (RKSSPSSPAVR) has biased composition (low complexity). The span at 512–525 (LGRSQSFSHQQPSR) shows a compositional bias: polar residues. At Ser-517 the chain carries Phosphoserine. Phosphothreonine is present on Thr-541. Ser-546 is modified (phosphoserine).

In terms of assembly, component of the multisubunit TRAPP II complex, which includes at least TRAPPC1, TRAPPC2, TRAPPC2L, TRAPPC3, TRAPPC4, TRAPPC5, TRAPPC6A/B, TRAPPC9, TRAPPC10 and TRAPPC14. TRAPPC9, TRAPPC10 and TRAPPC14 are specific subunits of the TRAPP II complex. Interacts with alpha-tubulin during mitosis. Interacts with RAB3IP (via the N-terminal region); this interaction mediates RAB3IP association with the TRAPP II complex. Interacts with TRAPPC10. Interacts with FBF1.

The protein resides in the cytoplasm. It localises to the cytoskeleton. The protein localises to the spindle. It is found in the vesicle. Its subcellular location is the midbody. Specific subunit of the TRAPP (transport protein particle) II complex, a highly conserved vesicle tethering complex that functions in late Golgi trafficking as a membrane tether. TRAPPC14 is dispensable for TRAPPII complex integrity but mediates RAB3IP preciliary vesicle trafficking to the mother centriole during ciliogenesis. Modulates YAP1 activity as transcriptional regulator. The polypeptide is Trafficking protein particle complex subunit 14 (Mus musculus (Mouse)).